Reading from the N-terminus, the 383-residue chain is Putative type I specificity subunit S.MgeORF438P (383 aa).

The segment at 1–142 is TRD1; it reads MTPKLKLNNN…KELEIPFTSN (142 aa). The conserved region 1 stretch occupies residues 143–182; sequence KNEQHAIANTLSVFDERLENLASLIEINRKLRDEYAHKLF. Residues 143 to 182 adopt a coiled-coil conformation; that stretch reads KNEQHAIANTLSVFDERLENLASLIEINRKLRDEYAHKLF. Residues 183–330 are TRD2; it reads SLDEAFLSHW…GEIKVPYVKS (148 aa). Positions 331 to 370 are conserved region 2; it reads FQLQRKAGKIVFLLDQKLDQYKKELSSLTVIRDTLLKKLF. Residues 331-370 are a coiled coil; that stretch reads FQLQRKAGKIVFLLDQKLDQYKKELSSLTVIRDTLLKKLF.

The protein belongs to the type-I restriction system S methylase family.

Functionally, the specificity (S) subunit of a type I restriction enzyme; this subunit dictates DNA sequence specificity. This bacterium does not encode the associated endonuclease or methylase subunits. The sequence is that of Putative type I specificity subunit S.MgeORF438P from Mycoplasma genitalium (strain ATCC 33530 / DSM 19775 / NCTC 10195 / G37) (Mycoplasmoides genitalium).